Reading from the N-terminus, the 317-residue chain is Malate dehydrogenase (317 aa).

Residues 15–20 (GSGNIG) and aspartate 39 contribute to the NAD(+) site. Arginine 88 and arginine 94 together coordinate substrate. NAD(+) contacts are provided by residues asparagine 101 and 124-126 (VTN). The substrate site is built by asparagine 126 and arginine 157. The Proton acceptor role is filled by histidine 181.

It belongs to the LDH/MDH superfamily. MDH type 3 family.

The enzyme catalyses (S)-malate + NAD(+) = oxaloacetate + NADH + H(+). Its function is as follows. Catalyzes the reversible oxidation of malate to oxaloacetate. The chain is Malate dehydrogenase from Ehrlichia ruminantium (strain Gardel).